A 221-amino-acid chain; its full sequence is Probable glutathione S-transferase parC (221 aa).

One can recognise a GST N-terminal domain in the interval 4–83 (EEVILLDFWP…YIEEVWKDKA (80 aa)). Glutathione contacts are provided by residues serine 14, lysine 41, isoleucine 55, and 67–68 (ES). Positions 90–214 (DPYDRAQARF…PKVLEFVKVL (125 aa)) constitute a GST C-terminal domain.

This sequence belongs to the GST superfamily. Phi family. In terms of tissue distribution, abundant in seedlings and roots. It is also found in the shoot tips, flowers and leaves.

It carries out the reaction RX + glutathione = an S-substituted glutathione + a halide anion + H(+). Conjugation of reduced glutathione to a wide number of exogenous and endogenous hydrophobic electrophiles. This chain is Probable glutathione S-transferase parC (PARC), found in Nicotiana tabacum (Common tobacco).